Here is a 361-residue protein sequence, read N- to C-terminus: Trehalose 6-phosphate phosphatase RA3 (361 aa).

The protein belongs to the trehalose phosphatase family. Requires a divalent metal cation as cofactor. In terms of tissue distribution, expressed in axillary inflorescence meristems.

It carries out the reaction alpha,alpha-trehalose 6-phosphate + H2O = alpha,alpha-trehalose + phosphate. It participates in glycan biosynthesis; trehalose biosynthesis. Removes the phosphate from trehalose 6-phosphate to produce free trehalose. Is specific for trehalose 6-phosphate. Does not possess activity toward glucose, sucrose or fructose 6-phosphates. Regulates inflorescence branching. Required to establish the correct identity and determinacy of axillary meristems in both male and female inflorescences. May act through a sugar signal that moves into axillary meristems. Acts upstream of RA1. May have a transcriptional regulatory function. This chain is Trehalose 6-phosphate phosphatase RA3, found in Zea mays (Maize).